A 475-amino-acid chain; its full sequence is Ankyrin repeat, SAM and basic leucine zipper domain-containing protein 1 (475 aa).

3 positions are modified to phosphoserine: Ser17, Ser18, and Ser20. ANK repeat units follow at residues Glu45–Ser74, Tyr78–Phe107, Asp110–Val144, Arg148–Ser177, Asn181–Leu210, and Asp214–Gly243. The SAM domain maps to Ser272–Glu334.

In terms of assembly, interacts with DDX4, PIWIL1, RANBP9 and TDRD1.

The protein localises to the cytoplasm. Its function is as follows. Plays a central role during spermatogenesis by repressing transposable elements and preventing their mobilization, which is essential for the germline integrity. Acts via the piRNA metabolic process, which mediates the repression of transposable elements during meiosis by forming complexes composed of piRNAs and Piwi proteins and governs the methylation and subsequent repression of transposons. Its association with pi-bodies suggests a participation in the primary piRNAs metabolic process. Required prior to the pachytene stage to facilitate the production of multiple types of piRNAs, including those associated with repeats involved in the regulation of retrotransposons. May act by mediating protein-protein interactions during germ cell maturation. This is Ankyrin repeat, SAM and basic leucine zipper domain-containing protein 1 (ASZ1) from Mustela putorius furo (European domestic ferret).